We begin with the raw amino-acid sequence, 573 residues long: 60 kDa lysophospholipase (573 aa).

Residues 9 to 355 (RRLLAVYTGG…DVRKELLTKD (347 aa)) form the Asparaginase/glutaminase domain. Threonine 19 serves as the catalytic Acyl-ester intermediate. Residues 41–350 (TLPMFHDEEH…PGLSLDVRKE (310 aa)) form an asparaginase region. Substrate is bound by residues 84–86 (DSS) and 116–117 (TD). ANK repeat units lie at residues 141-170 (GAQVPIHALWSDGRENLLGALLMAGQYVIP), 399-429 (ALVPSLACAAAHAGDVEALQALVELGSDLGL), 433-462 (NGQTPLHAAARGGHTEAVTMLLQRGVDVNT), 466-495 (DGFSPLLLAVRGRHPGVIGLLREAGASLST), and 533-562 (DGHSALHVAEAAGNLAVVAFLQSLEGAVGA).

The protein in the N-terminal section; belongs to the asparaginase 1 family. As to quaternary structure, monomer.

It catalyses the reaction a 1-acyl-sn-glycero-3-phosphocholine + H2O = sn-glycerol 3-phosphocholine + a fatty acid + H(+). It carries out the reaction L-asparagine + H2O = L-aspartate + NH4(+). The enzyme catalyses a 1-O-alkyl-2-acetyl-sn-glycero-3-phosphocholine + H2O = a 1-O-alkyl-sn-glycero-3-phosphocholine + acetate + H(+). The catalysed reaction is 1-hexadecanoyl-sn-glycero-3-phosphocholine + H2O = sn-glycerol 3-phosphocholine + hexadecanoate + H(+). It catalyses the reaction 2 1-hexadecanoyl-sn-glycero-3-phosphocholine = 1,2-dihexadecanoyl-sn-glycero-3-phosphocholine + sn-glycerol 3-phosphocholine. It carries out the reaction 1-octadecanoyl-sn-glycero-3-phosphocholine + H2O = octadecanoate + sn-glycerol 3-phosphocholine + H(+). The enzyme catalyses 1-(9Z-octadecenoyl)-sn-glycero-3-phosphocholine + H2O = sn-glycerol 3-phosphocholine + (9Z)-octadecenoate + H(+). The catalysed reaction is 1-hexadecanoyl-sn-glycero-3-phosphoethanolamine + H2O = sn-glycero-3-phosphoethanolamine + hexadecanoate + H(+). It catalyses the reaction 1-(9Z-octadecenoyl)-sn-glycero-3-phosphoethanolamine + H2O = sn-glycero-3-phosphoethanolamine + (9Z)-octadecenoate + H(+). It carries out the reaction 1-hexadecanoyl-sn-glycero-3-phosphoethanolamine + 1-hexadecanoyl-sn-glycero-3-phosphocholine = 1,2-dihexadecanoyl-sn-glycero-3-phosphoethanolamine + sn-glycerol 3-phosphocholine. The enzyme catalyses 2-(5Z,8Z,11Z,14Z)-eicosatetraenoyl-sn-glycero-3-phosphocholine + H2O = sn-glycerol 3-phosphocholine + (5Z,8Z,11Z,14Z)-eicosatetraenoate + H(+). The catalysed reaction is 2-hexadecanoyl-sn-glycero-3-phosphocholine + H2O = sn-glycerol 3-phosphocholine + hexadecanoate + H(+). It catalyses the reaction 2 2-hexadecanoyl-sn-glycero-3-phosphocholine = 1,2-dihexadecanoyl-sn-glycero-3-phosphocholine + sn-glycerol 3-phosphocholine. It carries out the reaction 1-O-(9Z)-octadecenoyl-2-O-acetyl-sn-glycero-3-phosphocholine + H2O = 2-acetyl-sn-glycero-3-phosphocholine + (9Z)-octadecenoate + H(+). The enzyme catalyses a 1-acyl-sn-glycero-3-phospho-(1D-myo-inositol) + 1-hexadecanoyl-sn-glycero-3-phosphocholine = a 1-acyl-2-hexadecanoyl-sn-glycero-3-phospho-(1D-myo-inositol) + sn-glycerol 3-phosphocholine. The catalysed reaction is 2 2-(5Z,8Z,11Z,14Z)-eicosatetraenoyl-sn-glycero-3-phosphocholine = 1,2-di-(5Z,8Z,11Z,14Z-eicosatetraenoyl)-sn-glycero-3-phosphocholine + sn-glycerol 3-phosphocholine. In terms of biological role, exhibits lysophospholipase, transacylase, PAF acetylhydrolase and asparaginase activities. Can catalyze three types of transacylation reactions: (1) acyl transfer from 1-acyl-sn-glycero-3-phosphocholine (1-acyl-GPC) to the sn-1(3) positions of glycerol and 2-acylglycerol (sn-1 to -1(3) transfer), (2) acyl transfer from 1-acyl-GPC to the sn-2 positions of 1-acyl-GPC, 1-acyl-sn-glycero-3-phosphoethanolamine (1-acyl-GPE), and other lysophospholipids (sn-1 to -2 transfer) and (3) acyl transfer from 2-acyl-GPC to the sn-1 position of 2-acyl-GPC and 2-acyl-GPE (sn-2 to -1 transfer). Mediates the synthesis of 1-arachidonoyl species of phospholipids by transferring the arachidonoyl residue from 2-arachidonoyl lysophospholipid to the sn-1 position of 2-acyl lysophospholipid. The polypeptide is 60 kDa lysophospholipase (ASPG) (Homo sapiens (Human)).